A 413-amino-acid polypeptide reads, in one-letter code: Histidine--tRNA ligase (413 aa).

The protein belongs to the class-II aminoacyl-tRNA synthetase family. As to quaternary structure, homodimer.

Its subcellular location is the cytoplasm. The enzyme catalyses tRNA(His) + L-histidine + ATP = L-histidyl-tRNA(His) + AMP + diphosphate + H(+). This is Histidine--tRNA ligase from Neorickettsia sennetsu (strain ATCC VR-367 / Miyayama) (Ehrlichia sennetsu).